Reading from the N-terminus, the 360-residue chain is Pyrimidine monooxygenase RutA (360 aa).

Residues 49–50, asparagine 115, glutamate 124, 140–141, and serine 190 each bind FMN; these read IK and RY.

The protein belongs to the NtaA/SnaA/DszA monooxygenase family. RutA subfamily.

The catalysed reaction is uracil + FMNH2 + NADH + O2 = (Z)-3-ureidoacrylate + FMN + NAD(+) + H2O + H(+). It catalyses the reaction thymine + FMNH2 + NADH + O2 = (Z)-2-methylureidoacrylate + FMN + NAD(+) + H2O + H(+). Its function is as follows. Catalyzes the pyrimidine ring opening between N-3 and C-4 by an unusual flavin hydroperoxide-catalyzed mechanism, adding oxygen atoms in the process to yield ureidoacrylate peracid, that immediately reacts with FMN forming ureidoacrylate and FMN-N(5)-oxide. The FMN-N(5)-oxide reacts spontaneously with NADH to produce FMN. Requires the flavin reductase RutF to regenerate FMN in vivo. This is Pyrimidine monooxygenase RutA from Stutzerimonas stutzeri (strain A1501) (Pseudomonas stutzeri).